The primary structure comprises 147 residues: MALKRIQKELMDLQRDPPAQCSAGPVGEDLFHWQATIMGPNDSPFQGGVFFLTIHFPTDYPFKPPKVAFTTKIYHPNINSNGSICLDILRSQWSPALTVSKVLLSICSLLCDPNPDDPLVPEIAHTYKADREKYNRLAREWTQKYAM.

One can recognise a UBC core domain in the interval 1–147 (MALKRIQKEL…AREWTQKYAM (147 aa)). Cys85 serves as the catalytic Glycyl thioester intermediate.

The protein belongs to the ubiquitin-conjugating enzyme family. In terms of assembly, interacts with map3k10/mlk2. In terms of tissue distribution, at embryonic stages 28 to 35, expressed in the somites, eye primordia, otic vesicle and branchial arches. By stage 35, also weakly expressed in the pronephros.

It carries out the reaction S-ubiquitinyl-[E1 ubiquitin-activating enzyme]-L-cysteine + [E2 ubiquitin-conjugating enzyme]-L-cysteine = [E1 ubiquitin-activating enzyme]-L-cysteine + S-ubiquitinyl-[E2 ubiquitin-conjugating enzyme]-L-cysteine.. Its pathway is protein modification; protein ubiquitination. Catalyzes the covalent attachment of ubiquitin to other proteins. Regulates pronephros development, possibly by promoting ubiquitination and thus inactivation or degradation of map3k10/mlk2. In Xenopus laevis (African clawed frog), this protein is Ubiquitin-conjugating enzyme E2 D4 (ube2d4).